The following is a 180-amino-acid chain: Large ribosomal subunit protein uL10 (180 aa).

This sequence belongs to the universal ribosomal protein uL10 family. As to quaternary structure, part of the ribosomal stalk of the 50S ribosomal subunit. The N-terminus interacts with L11 and the large rRNA to form the base of the stalk. The C-terminus forms an elongated spine to which L12 dimers bind in a sequential fashion forming a multimeric L10(L12)X complex.

In terms of biological role, forms part of the ribosomal stalk, playing a central role in the interaction of the ribosome with GTP-bound translation factors. The chain is Large ribosomal subunit protein uL10 from Thermosipho melanesiensis (strain DSM 12029 / CIP 104789 / BI429).